An 828-amino-acid polypeptide reads, in one-letter code: BEN domain-containing protein 3 (828 aa).

A Glycyl lysine isopeptide (Lys-Gly) (interchain with G-Cter in SUMO); alternate cross-link involves residue K20. K20 participates in a covalent cross-link: Glycyl lysine isopeptide (Lys-Gly) (interchain with G-Cter in SUMO1); alternate. A Glycyl lysine isopeptide (Lys-Gly) (interchain with G-Cter in SUMO2); alternate cross-link involves residue K20. Residues K41, K56, K58, K73, K128, K129, K137, K142, and K158 each participate in a glycyl lysine isopeptide (Lys-Gly) (interchain with G-Cter in SUMO2) cross-link. The short motif at 56–58 (KRK) is the Nuclear localization signal element. S164 carries the post-translational modification Phosphoserine. The tract at residues 164-184 (SPSSLRLLNEPQKRDCGSTGA) is disordered. K176 participates in a covalent cross-link: Glycyl lysine isopeptide (Lys-Gly) (interchain with G-Cter in SUMO2). The 102-residue stretch at 242 to 343 (PPPEYQLTAA…DFFSRFWAQR (102 aa)) folds into the BEN 1 domain. S379 is modified (phosphoserine). In terms of domain architecture, BEN 2 spans 387–487 (ASDHVVDTQD…DELEGLGLDA (101 aa)). K427 participates in a covalent cross-link: Glycyl lysine isopeptide (Lys-Gly) (interchain with G-Cter in SUMO2). The segment at 483 to 504 (LGLDAGSEGDPPRDDCYDSSSL) is disordered. The residue at position 489 (S489) is a Phosphoserine. Residue K512 forms a Glycyl lysine isopeptide (Lys-Gly) (interchain with G-Cter in SUMO); alternate linkage. Residue K512 forms a Glycyl lysine isopeptide (Lys-Gly) (interchain with G-Cter in SUMO2); alternate linkage. K528 is covalently cross-linked (Glycyl lysine isopeptide (Lys-Gly) (interchain with G-Cter in SUMO2)). The BEN 3 domain occupies 548-650 (VPGADCLLSK…ERCRRRDTEQ (103 aa)). K700 is covalently cross-linked (Glycyl lysine isopeptide (Lys-Gly) (interchain with G-Cter in SUMO2)). The region spanning 715–816 (VPSPYLLSDK…ERCRRPNRKK (102 aa)) is the BEN 4 domain.

As to quaternary structure, homooligomer, probably a homooctamer. Interacts with HDAC2 and HDAC3, but not HDAC1. Interacts with SALL4. Interacts with SMARCA5/SNF2H, BAZ2A/TIP5 and USP21. Interacts with the nucleosome remodeling and histone deacetylase (NuRD) repressor complex. Interacts (via BEN domains 1 and 3) with ERCC6L (via N-terminal TPR repeat); the interaction is direct. Sumoylated at Lys-20 by SUMO1 and at Lys-512 by SUMO1, SUMO2 and SUMO3. Sumoylation probably occurs sequentially, with that of Lys-20 preceding that of Lys-512. It does not alter association with heterochromatin, but is required for the repression of transcription. In terms of tissue distribution, expressed at least in heart, kidney, liver, ovary and spleen, with highest levels in spleen and lowest in heart. Expressed on the surface of T-cells.

Its subcellular location is the nucleus. It is found in the nucleolus. Transcriptional repressor which associates with the NoRC (nucleolar remodeling complex) complex and plays a key role in repressing rDNA transcription. The sumoylated form modulates the stability of the NoRC complex component BAZ2A/TIP5 by controlling its USP21-mediated deubiquitination. Binds to unmethylated major satellite DNA and is involved in the recruitment of the Polycomb repressive complex 2 (PRC2) to major satellites. Stimulates the ERCC6L translocase and ATPase activities. This Homo sapiens (Human) protein is BEN domain-containing protein 3 (BEND3).